The sequence spans 298 residues: Junctional adhesion molecule B (298 aa).

The N-terminal stretch at 1-28 (MARRSRHRLLLLLLRYLVVALGYHKAYG) is a signal peptide. The Extracellular segment spans residues 29–238 (FSAPKDQQVV…RMQVDDLNIS (210 aa)). The Ig-like V-type domain occupies 32 to 127 (PKDQQVVTAV…GQNLEEDTVT (96 aa)). Cystine bridges form between cysteine 50/cysteine 109 and cysteine 155/cysteine 214. Asparagine 98, asparagine 187, and asparagine 236 each carry an N-linked (GlcNAc...) asparagine glycan. The 105-residue stretch at 134–238 (PAVPSCEVPS…RMQVDDLNIS (105 aa)) folds into the Ig-like C2-type domain. Residues 239-259 (GIIAAVVVVALVISVCGLGVC) form a helical membrane-spanning segment. The Cytoplasmic portion of the chain corresponds to 260–298 (YAQRKGYFSKETSFQKSNSSSKATTMSENDFKHTKSFII).

The protein belongs to the immunoglobulin superfamily. As to expression, highly expressed in heart, placenta, lung, foreskin and lymph node. Prominently expressed on high endothelial venules and also present on the endothelia of other vessels (at protein level). Also expressed in the brain in the caudate nuclei.

Its subcellular location is the cell membrane. It is found in the cell junction. The protein localises to the tight junction. Junctional adhesion protein that mediates heterotypic cell-cell interactions with its cognate receptor JAM3 to regulate different cellular processes. Plays a role in homing and mobilization of hematopoietic stem and progenitor cells within the bone marrow. At the surface of bone marrow stromal cells, it contributes to the retention of the hematopoietic stem and progenitor cells expressing JAM3. Plays a central role in leukocytes extravasation by facilitating not only transmigration but also tethering and rolling of leukocytes along the endothelium. Tethering and rolling of leukocytes are dependent on the binding by JAM2 of the integrin alpha-4/beta-1. Plays a role in spermatogenesis where JAM2 and JAM3, which are respectively expressed by Sertoli and germ cells, mediate an interaction between both cell types and play an essential role in the anchorage of germ cells onto Sertoli cells and the assembly of cell polarity complexes during spermatid differentiation. Also functions as an inhibitory somatodendritic cue that prevents the myelination of non-axonal parts of neurons. During myogenesis, it is involved in myocyte fusion. May also play a role in angiogenesis. This Homo sapiens (Human) protein is Junctional adhesion molecule B.